We begin with the raw amino-acid sequence, 362 residues long: Histidine protein methyltransferase 1 homolog (362 aa).

Residues 28 to 89 (KSQKGKEDKN…ACEKQPSLKP (62 aa)) are disordered. Residues 55–73 (SLGSAASSEDTDSPPSTAD) show a composition bias toward polar residues. Phosphoserine is present on residues serine 62 and serine 67. Histidine 144 is subject to Tele-methylhistidine. Residues 158 to 162 (IWECT), glycine 185, and 206 to 208 (QDY) each bind S-adenosyl-L-methionine. The Nuclear localization signal motif lies at 237–243 (PAGKRQR). S-adenosyl-L-methionine contacts are provided by residues 259 to 261 (GEW) and serine 283.

This sequence belongs to the methyltransferase superfamily. METTL18 family. In terms of assembly, interacts with GRWD1 and members of the heat shock protein 90 and 70 families; these proteins may possibly be methylation substrates for the enzyme. In terms of processing, monomethylated at His-144 through automethylation. Automethylation at His-144 positively regulates the methyltransferase activity toward RPL3. Probably methylated on other residues.

The protein localises to the cytoplasm. It localises to the cytosol. The protein resides in the nucleus. Its subcellular location is the nucleolus. It carries out the reaction L-histidyl-[protein] + S-adenosyl-L-methionine = N(tele)-methyl-L-histidyl-[protein] + S-adenosyl-L-homocysteine + H(+). Protein-L-histidine N-tele-methyltransferase that specifically monomethylates RPL3, thereby regulating translation elongation. Histidine methylation of RPL3 regulates translation elongation by slowing ribosome traversal on tyrosine codons: slower elongation provides enough time for proper folding of synthesized proteins and prevents cellular aggregation of tyrosine-rich proteins. This chain is Histidine protein methyltransferase 1 homolog, found in Rattus norvegicus (Rat).